The chain runs to 247 residues: Serine/threonine-protein phosphatase 2A activator (247 aa).

Belongs to the PTPA-type PPIase family.

Its subcellular location is the cytoplasm. It carries out the reaction [protein]-peptidylproline (omega=180) = [protein]-peptidylproline (omega=0). In terms of biological role, PPIases accelerate the folding of proteins. It catalyzes the cis-trans isomerization of proline imidic peptide bonds in oligopeptides. Acts as a regulatory subunit for PP2A-like phosphatases modulating their activity or substrate specificity, probably by inducing a conformational change in the catalytic subunit, a direct target of the PPIase. Can reactivate inactive phosphatase PP2A-phosphatase methylesterase complexes (PP2Ai) in presence of ATP and Mg(2+) by dissociating the inactive form from the complex. The polypeptide is Serine/threonine-protein phosphatase 2A activator (Encephalitozoon cuniculi (strain GB-M1) (Microsporidian parasite)).